A 397-amino-acid polypeptide reads, in one-letter code: Enoyl-[acyl-carrier-protein] reductase [NADH] (397 aa).

NAD(+) is bound by residues 48–53, 74–75, 111–112, and 139–140; these read GASTGY, FE, DA, and VA. Tyr225 lines the substrate pocket. Tyr235 functions as the Proton donor in the catalytic mechanism. Residues Lys244 and 273 to 275 each bind NAD(+); that span reads VVT.

Belongs to the TER reductase family. As to quaternary structure, monomer.

The enzyme catalyses a 2,3-saturated acyl-[ACP] + NAD(+) = a (2E)-enoyl-[ACP] + NADH + H(+). It functions in the pathway lipid metabolism; fatty acid biosynthesis. Involved in the final reduction of the elongation cycle of fatty acid synthesis (FAS II). Catalyzes the reduction of a carbon-carbon double bond in an enoyl moiety that is covalently linked to an acyl carrier protein (ACP). This is Enoyl-[acyl-carrier-protein] reductase [NADH] from Burkholderia mallei (strain NCTC 10247).